A 141-amino-acid chain; its full sequence is Putative pre-16S rRNA nuclease (141 aa).

This sequence belongs to the YqgF nuclease family.

The protein localises to the cytoplasm. In terms of biological role, could be a nuclease involved in processing of the 5'-end of pre-16S rRNA. In Amoebophilus asiaticus (strain 5a2), this protein is Putative pre-16S rRNA nuclease.